We begin with the raw amino-acid sequence, 338 residues long: Lumican (338 aa).

A signal peptide spans 1–18; that stretch reads MNVCTFTLVLALVGSVSG. Gln19 carries the post-translational modification Pyrrolidone carboxylic acid. 4 positions are modified to sulfotyrosine: Tyr20, Tyr21, Tyr23, and Tyr30. The 39-residue stretch at 28 to 66 folds into the LRRNT domain; the sequence is FMYGELSPNCAPECNCPHSYPTAMYCDDLKLKSVPMVPP. LRR repeat units lie at residues 67–88, 91–114, 117–137, 138–159, 160–181, 185–205, 206–227, and 230–250; these read GIKY…AFEN, DLQW…VFSK, QLKK…PLPK, SLQD…DGLV, NLTF…ASLK, SLEY…GLPT, SLLT…YFNR, and GLQY…PGNS. Asn88 carries an N-linked (GlcNAc...) (keratan sulfate) asparagine glycan. Residue Asn127 is glycosylated (N-linked (GlcNAc...) (keratan sulfate) asparagine). The N-linked (GlcNAc...) (keratan sulfate) asparagine glycan is linked to Asn160. Asn252 carries N-linked (GlcNAc...) (keratan sulfate) asparagine glycosylation. 2 LRR repeats span residues 255-276 and 277-296; these read SLLE…NENL and ENYY…SFCK. Cysteines 295 and 328 form a disulfide. Phosphoserine is present on Ser304. Residues 305–326 form an LRR 11 repeat; it reads KIKHLRLDGNPLTQSSLPPDMY.

Belongs to the small leucine-rich proteoglycan (SLRP) family. SLRP class II subfamily. In terms of assembly, binds to laminin. Post-translationally, contains keratan sulfate.

The protein localises to the secreted. It localises to the extracellular space. It is found in the extracellular matrix. The protein is Lumican (Lum) of Rattus norvegicus (Rat).